The sequence spans 518 residues: Serine hydroxymethyltransferase, mitochondrial (518 aa).

A mitochondrion-targeting transit peptide spans 1-31; that stretch reads MAMAMALRKLSSSVNKSSRPLFSASSLYYKS. Lys-287 is subject to N6-(pyridoxal phosphate)lysine.

It belongs to the SHMT family. As to quaternary structure, homotetramer. The cofactor is pyridoxal 5'-phosphate.

Its subcellular location is the mitochondrion. The enzyme catalyses (6R)-5,10-methylene-5,6,7,8-tetrahydrofolate + glycine + H2O = (6S)-5,6,7,8-tetrahydrofolate + L-serine. It functions in the pathway one-carbon metabolism; tetrahydrofolate interconversion. Functionally, catalyzes the interconversion of serine and glycine. This is Serine hydroxymethyltransferase, mitochondrial from Pisum sativum (Garden pea).